The following is a 125-amino-acid chain: Small ribosomal subunit protein uS13 (125 aa).

The disordered stretch occupies residues 90 to 125; that stretch reads QRHRKGLPVRGQRTKTNARTRKGPKRTVAGKKKATK.

It belongs to the universal ribosomal protein uS13 family. Part of the 30S ribosomal subunit. Forms a loose heterodimer with protein S19. Forms two bridges to the 50S subunit in the 70S ribosome.

Its function is as follows. Located at the top of the head of the 30S subunit, it contacts several helices of the 16S rRNA. In the 70S ribosome it contacts the 23S rRNA (bridge B1a) and protein L5 of the 50S subunit (bridge B1b), connecting the 2 subunits; these bridges are implicated in subunit movement. Contacts the tRNAs in the A and P-sites. The chain is Small ribosomal subunit protein uS13 from Bifidobacterium longum (strain DJO10A).